Consider the following 65-residue polypeptide: Large ribosomal subunit protein bL35 (65 aa).

Residues 28 to 53 (NGSHNLEKKNRKRTRRLHQSTMLDNA) are disordered. Positions 36 to 45 (KNRKRTRRLH) are enriched in basic residues.

It belongs to the bacterial ribosomal protein bL35 family.

The polypeptide is Large ribosomal subunit protein bL35 (Chlorobium luteolum (strain DSM 273 / BCRC 81028 / 2530) (Pelodictyon luteolum)).